The sequence spans 180 residues: Cytochrome b6-f complex iron-sulfur subunit (180 aa).

The chain crosses the membrane as a helical span at residues 21–43 (LLTFGTITGTALGALYPVVKYFI). The Rieske domain maps to 66–162 (VSEYLAKHLP…ATVTEDDKLV (97 aa)). Positions 108, 110, 126, and 129 each coordinate [2Fe-2S] cluster. A disulfide bond links Cys113 and Cys128.

This sequence belongs to the Rieske iron-sulfur protein family. The 4 large subunits of the cytochrome b6-f complex are cytochrome b6, subunit IV (17 kDa polypeptide, PetD), cytochrome f and the Rieske protein, while the 4 small subunits are PetG, PetL, PetM and PetN. The complex functions as a dimer. [2Fe-2S] cluster is required as a cofactor.

It is found in the cellular thylakoid membrane. It catalyses the reaction 2 oxidized [plastocyanin] + a plastoquinol + 2 H(+)(in) = 2 reduced [plastocyanin] + a plastoquinone + 4 H(+)(out). Component of the cytochrome b6-f complex, which mediates electron transfer between photosystem II (PSII) and photosystem I (PSI), cyclic electron flow around PSI, and state transitions. The chain is Cytochrome b6-f complex iron-sulfur subunit from Thermosynechococcus vestitus (strain NIES-2133 / IAM M-273 / BP-1).